The primary structure comprises 415 residues: Serine hydroxymethyltransferase (415 aa).

(6S)-5,6,7,8-tetrahydrofolate is bound by residues Leu-120 and 124–126 (GHL). Lys-229 is subject to N6-(pyridoxal phosphate)lysine.

This sequence belongs to the SHMT family. Homodimer. It depends on pyridoxal 5'-phosphate as a cofactor.

It is found in the cytoplasm. The enzyme catalyses (6R)-5,10-methylene-5,6,7,8-tetrahydrofolate + glycine + H2O = (6S)-5,6,7,8-tetrahydrofolate + L-serine. Its pathway is one-carbon metabolism; tetrahydrofolate interconversion. It participates in amino-acid biosynthesis; glycine biosynthesis; glycine from L-serine: step 1/1. Catalyzes the reversible interconversion of serine and glycine with tetrahydrofolate (THF) serving as the one-carbon carrier. This reaction serves as the major source of one-carbon groups required for the biosynthesis of purines, thymidylate, methionine, and other important biomolecules. Also exhibits THF-independent aldolase activity toward beta-hydroxyamino acids, producing glycine and aldehydes, via a retro-aldol mechanism. This chain is Serine hydroxymethyltransferase, found in Pelotomaculum thermopropionicum (strain DSM 13744 / JCM 10971 / SI).